A 244-amino-acid polypeptide reads, in one-letter code: Small ribosomal subunit protein uS2m (244 aa).

Belongs to the universal ribosomal protein uS2 family.

It localises to the mitochondrion. The protein is Small ribosomal subunit protein uS2m (mrps2) of Dictyostelium discoideum (Social amoeba).